The chain runs to 154 residues: Transcription antitermination protein NusB (154 aa).

This sequence belongs to the NusB family.

Functionally, involved in transcription antitermination. Required for transcription of ribosomal RNA (rRNA) genes. Binds specifically to the boxA antiterminator sequence of the ribosomal RNA (rrn) operons. The protein is Transcription antitermination protein NusB of Enterococcus faecalis (strain ATCC 700802 / V583).